An 89-amino-acid chain; its full sequence is Small ribosomal subunit protein uS15 (89 aa).

The protein belongs to the universal ribosomal protein uS15 family. In terms of assembly, part of the 30S ribosomal subunit. Forms a bridge to the 50S subunit in the 70S ribosome, contacting the 23S rRNA.

One of the primary rRNA binding proteins, it binds directly to 16S rRNA where it helps nucleate assembly of the platform of the 30S subunit by binding and bridging several RNA helices of the 16S rRNA. Functionally, forms an intersubunit bridge (bridge B4) with the 23S rRNA of the 50S subunit in the ribosome. The polypeptide is Small ribosomal subunit protein uS15 (Mycobacterium marinum (strain ATCC BAA-535 / M)).